The primary structure comprises 60 residues: Short neurotoxin 1 (60 aa).

4 disulfides stabilise this stretch: C3–C22, C17–C39, C41–C52, and C53–C58.

This sequence belongs to the three-finger toxin family. Short-chain subfamily. Type I alpha-neurotoxin sub-subfamily. As to expression, expressed by the venom gland.

The protein resides in the secreted. Its function is as follows. Binds to muscle nicotinic acetylcholine receptor (nAChR) and inhibit acetylcholine from binding to the receptor, thereby impairing neuromuscular transmission. In Dendroaspis jamesoni kaimosae (Eastern Jameson's mamba), this protein is Short neurotoxin 1.